Consider the following 339-residue polypeptide: Cathepsin B (339 aa).

The N-terminal stretch at Met-1 to Ala-17 is a signal peptide. Positions Arg-18–Lys-79 are cleaved as a propeptide — activation peptide. Cystine bridges form between Cys-93–Cys-122, Cys-105–Cys-150, Cys-141–Cys-207, Cys-142–Cys-146, Cys-179–Cys-211, and Cys-187–Cys-198. Cys-108 is a catalytic residue. Asn-192 is a glycosylation site (N-linked (GlcNAc...) asparagine). Lys-220 bears the N6-acetyllysine mark. Active-site residues include His-278 and Asn-298. The propeptide occupies Gln-334–Ile-339.

The protein belongs to the peptidase C1 family. In terms of assembly, dimer of a heavy chain and a light chain cross-linked by a disulfide bond. Interacts with SRPX2. Directly interacts with SHKBP1. As to expression, expressed in the stratum spinosum of the epidermis. Weak expression is detected in the stratum granulosum.

It is found in the lysosome. The protein localises to the melanosome. It localises to the secreted. The protein resides in the extracellular space. Its subcellular location is the apical cell membrane. It catalyses the reaction Hydrolysis of proteins with broad specificity for peptide bonds. Preferentially cleaves -Arg-Arg-|-Xaa bonds in small molecule substrates (thus differing from cathepsin L). In addition to being an endopeptidase, shows peptidyl-dipeptidase activity, liberating C-terminal dipeptides.. Inhibited by leupeptin. Functionally, thiol protease which is believed to participate in intracellular degradation and turnover of proteins. Cleaves matrix extracellular phosphoglycoprotein MEPE. Involved in the solubilization of cross-linked TG/thyroglobulin in the thyroid follicle lumen. Has also been implicated in tumor invasion and metastasis. The polypeptide is Cathepsin B (CTSB) (Homo sapiens (Human)).